A 291-amino-acid chain; its full sequence is Beta-lactamase CTX-M-1 (291 aa).

Residues 1–28 (MVKKSLRQFTLMATATVTLLLGSVPLYA) form the signal peptide. S73 serves as the catalytic Nucleophile; acyl-ester intermediate. Residues K76, S133, E169, and S240 each contribute to the a beta-lactam site. The Proton acceptor role is filled by E169.

The protein belongs to the class-A beta-lactamase family. In terms of assembly, monomer.

It is found in the secreted. The catalysed reaction is a beta-lactam + H2O = a substituted beta-amino acid. Its activity is regulated as follows. Inhibited by the beta-lactamase-blocking agent clavulanic acid; in the TG1 strain. Its function is as follows. Extended-spectrum beta-lactamase (ESBL) which confers resistance to penicillins, as well as first, second and third-generation cephalosporins. Has cefotaxime-hydrolyzing activity. Inactive against the cephamycin antibiotic, cefoxitin, or against the carbapenem, imipenem. This is Beta-lactamase CTX-M-1 from Escherichia coli.